The primary structure comprises 651 residues: Meiotic expression up-regulated protein 6 (651 aa).

Composition is skewed to basic and acidic residues over residues 1–12 (MSYEGREERPEQ) and 21–30 (VSEHNEHDSG). The disordered stretch occupies residues 1–102 (MSYEGREERP…EKKSKKKAKD (102 aa)). Over residues 72–83 (TVDNIDPADDDP) the composition is skewed to acidic residues. Residues 90-102 (KVEEKKSKKKAKD) are compositionally biased toward basic and acidic residues. A PH domain is found at 194–261 (CRGLLFYSKS…WITDLKNAIA (68 aa)). Disordered stretches follow at residues 365 to 430 (TVEA…GTPI), 468 to 514 (VATP…KGGN), and 587 to 630 (TIKP…QMPQ). Polar residues-rich tracts occupy residues 410 to 429 (ESTS…NGTP) and 478 to 490 (PSTA…SVVS). Residues 497-514 (KKAGKKHHRHHKKKKGGN) are compositionally biased toward basic residues. Over residues 587 to 604 (TIKPETPLTPTTTPTPRT) the composition is skewed to low complexity.

The polypeptide is Meiotic expression up-regulated protein 6 (meu6) (Schizosaccharomyces pombe (strain 972 / ATCC 24843) (Fission yeast)).